The sequence spans 296 residues: m7GpppN-mRNA hydrolase NUDT17 (296 aa).

In terms of domain architecture, Nudix hydrolase spans 90 to 236 (GRGVDVGVAV…DSGSPCGPLP (147 aa)). The Nudix box signature appears at 129–150 (GHVELGEQLLEAGLRELQEETG). Mg(2+) is bound by residues E144 and E148.

This sequence belongs to the Nudix hydrolase family. Requires Mg(2+) as cofactor. The cofactor is Mn(2+).

The catalysed reaction is a 5'-end (N(7)-methyl 5'-triphosphoguanosine)-ribonucleoside in mRNA + H2O = N(7)-methyl-GDP + a 5'-end phospho-ribonucleoside in mRNA + 2 H(+). Functionally, acts as a decapping enzyme capable of hydrolyzing monomethylated capped RNAs (in vitro). Hydrolyzes monomethylated capped RNA after alpha and beta phosphates to form N(7)-methyl-GDP. Shows low activity towards unmethylated capped RNA. In Xenopus laevis (African clawed frog), this protein is m7GpppN-mRNA hydrolase NUDT17 (nudt17).